Reading from the N-terminus, the 928-residue chain is MLLYRGAPAGPGTPGGGLARAGSVPQAFRIRLSTMSPRYLQSNSSSHTRPFSAIAELLDNAVDPDVSARTVFIDVEEVKKKPCLTFTDDGCGMTPHKLHRMLSFGFTDKVIKKSQRPIGVFGNGFKSGSMRLGKDALVFTKNGNTLAVGLLSQTYLECIQAQAVIVPIVPFSQQNKKMIVTEDSLPSLEAILNYSIFNCEKDLLSQFDAIPGKKGTRVLIWNIRRNKDGKSELDFDTDQYDILVSDFDAEEKEIGGVTSELPETEYSLRAFCSILYMKPRMKIFLRQKKVTTQMIAKSLANVEYDIYKPTSTNKQVRITFGFSCKYHNQFGVMMYHNNRLIKAFEKAGCQLKPTCGEGVGVIGVIECNFLKPAYNKQDFEYTKEYRLTINALARKLNAYWKEKISQENFEPLPTSRRIPDQTWVQCDECLKWRRLPGMVDPSTLPARWFCYYNPHPKFKRCSVPEEQERIDEDLHRSKAKQQVEAAEKKQKPMESDKYQVFSNPPKTPPLQDMAELNDKTIGYEQINSPSLLPSVREESRSPPRLKSLDSSAFQISRKYKLILGEEPVEKRRKIQTEMPLSPIDYSMSGFYRRVEAATAYPEGENSPDKCSSERSTPPHLIPEYPESNKHTEENREAPALCPGSQDQDQGFLLPEELEDQMPKLVAEESNRSSENIDKDMNKGPFVAVVGVAKGVADSGAPIQLVPFNREEFVGKRKRAESWKRANPYSSAAPAATAGKGKDCQDSRSRNMPKIKTPKESEELKRTTEKLERVLAERNLFQQKVEELEQEKNHWHSEYKKAQHELVTYSTQETEGIYWSKKHMGYRQAEFQILKAELERTKEEKQELKEKLKETESHLEVLQKAQVSFRNPEGDDLERALARLTRLRVHVSYLLTSVLPHLELREIGYDSEQVDGILYTVLEANHILD.

The segment at 417–469 adopts a CW-type zinc-finger fold; sequence RIPDQTWVQCDECLKWRRLPGMVDPSTLPARWFCYYNPHPKFKRCSVPEEQER. Residues cysteine 426, cysteine 429, cysteine 450, and cysteine 461 each contribute to the Zn(2+) site. 4 disordered regions span residues 474-510, 527-546, 599-649, and 718-766; these read LHRS…TPPL, NSPS…PRLK, AYPE…DQDQ, and RAES…LKRT. Positions 485–497 are enriched in basic and acidic residues; that stretch reads AAEKKQKPMESDK. Basic and acidic residues-rich tracts occupy residues 626-636, 739-748, and 756-766; these read ESNKHTEENRE, KGKDCQDSRS, and TPKESEELKRT. Residues 758–867 adopt a coiled-coil conformation; sequence KESEELKRTT…LEVLQKAQVS (110 aa).

The protein localises to the nucleus. Its function is as follows. Histone methylation reader which binds to non-methylated (H3K4me0), monomethylated (H3K4me1), dimethylated (H3K4me2) and trimethylated (H3K4me3) 'Lys-4' on histone H3. The order of binding preference is H3K4me3 &gt; H3K4me2 &gt; H3K4me1 &gt; H3K4me0. The chain is MORC family CW-type zinc finger protein 4 (Morc4) from Mus musculus (Mouse).